A 307-amino-acid polypeptide reads, in one-letter code: Mitochondrial 2-oxodicarboxylate carrier 2 (307 aa).

6 helical membrane passes run 10-30, 76-95, 122-142, 171-191, 215-235, and 280-300; these read LPFI…LTVM, SRLY…KRAT, IAAG…FELI, GLYK…GGYF, LIAG…FDVV, and CRLA…MNFF. Solcar repeat units lie at residues 10 to 106, 116 to 200, and 209 to 299; these read LPFI…YQKI, TTQK…VRNS, and QKTR…MMNF.

This sequence belongs to the mitochondrial carrier (TC 2.A.29) family.

It is found in the mitochondrion inner membrane. Transports C5-C7 oxodicarboxylates across the inner membranes of mitochondria. Can transport 2-oxoadipate, 2-oxoglutarate, adipate, glutarate, 2-oxopimelate, oxaloacetate, citrate and malate. The main physiological role is probably to supply 2-oxoadipate and 2-oxoglutarate from the mitochondrial matrix to the cytosol where they are used in the biosynthesis of lysine and glutamate, respectively, and in lysine catabolism. The protein is Mitochondrial 2-oxodicarboxylate carrier 2 (ODC2) of Saccharomyces cerevisiae (strain ATCC 204508 / S288c) (Baker's yeast).